A 70-amino-acid polypeptide reads, in one-letter code: DNA-directed RNA polymerase subunit omega (70 aa).

This sequence belongs to the RNA polymerase subunit omega family. In terms of assembly, the RNAP catalytic core consists of 2 alpha, 1 beta, 1 beta' and 1 omega subunit. When a sigma factor is associated with the core the holoenzyme is formed, which can initiate transcription.

It carries out the reaction RNA(n) + a ribonucleoside 5'-triphosphate = RNA(n+1) + diphosphate. Its function is as follows. Promotes RNA polymerase assembly. Latches the N- and C-terminal regions of the beta' subunit thereby facilitating its interaction with the beta and alpha subunits. The chain is DNA-directed RNA polymerase subunit omega from Clostridium perfringens (strain ATCC 13124 / DSM 756 / JCM 1290 / NCIMB 6125 / NCTC 8237 / Type A).